Reading from the N-terminus, the 395-residue chain is Putative ankyrin repeat protein RF_0950 (395 aa).

ANK repeat units follow at residues 3–32 (YQKELLIEAIQEDNLKEVQKLLQAGVNPNT), 36–65 (YGKLCIRSAINNENLDIVKVLLDYGADPNA), 69–98 (IKDPIILEAIRSRELGIINSLLKKGANPNV), 101–130 (RHENPIILSALPRGVNIVNTLLNNGADPNQ), 134–166 (NGNTALSIILERTGDINVDVTALLIEKVKEKAL), 172–201 (NGETCLHLAAQQGKIQMFDKYLDYYQTVNI), and 205–234 (AGNTPLYWSKLLGHTEISDMLNKRAEELNE). The Glutamine amidotransferase type-1 domain occupies 272-395 (KTKLIYQGGD…YLKVPILKEK (124 aa)). Cys-377 functions as the Nucleophile in the catalytic mechanism.

This Rickettsia felis (strain ATCC VR-1525 / URRWXCal2) (Rickettsia azadi) protein is Putative ankyrin repeat protein RF_0950.